A 180-amino-acid chain; its full sequence is MSRVGNRVLVVPAGVTVDISASNFVSVTGKLGKLERAFSPKVKITLQDNTLTTQRLNEEKATKQLHGTTNALLANMLKGVSEGFQINLEIKGVGYKAELKGNKLVVAAGYSHLVTLDIPSNVEVKVPKPVEISVKGIDKQAVGAFAAVVREIRKPNPYSGKGISYKGEKIRRKEGKTASK.

The disordered stretch occupies residues 158-180 (YSGKGISYKGEKIRRKEGKTASK).

This sequence belongs to the universal ribosomal protein uL6 family. Part of the 50S ribosomal subunit.

This protein binds to the 23S rRNA, and is important in its secondary structure. It is located near the subunit interface in the base of the L7/L12 stalk, and near the tRNA binding site of the peptidyltransferase center. In Mycoplasmopsis synoviae (strain 53) (Mycoplasma synoviae), this protein is Large ribosomal subunit protein uL6.